The primary structure comprises 672 residues: uncharacterized protein (672 aa).

It belongs to the MG032/MG096/MG288 family.

This is an uncharacterized protein from Mycoplasma pneumoniae (strain ATCC 29342 / M129 / Subtype 1) (Mycoplasmoides pneumoniae).